The following is a 232-amino-acid chain: Ribose-5-phosphate isomerase A (232 aa).

Residues 28–31, 83–86, and 96–99 each bind substrate; these read TGST, DGAD, and KGGG. Catalysis depends on E105, which acts as the Proton acceptor. Residue K123 coordinates substrate.

It belongs to the ribose 5-phosphate isomerase family. In terms of assembly, homodimer.

The enzyme catalyses aldehydo-D-ribose 5-phosphate = D-ribulose 5-phosphate. It participates in carbohydrate degradation; pentose phosphate pathway; D-ribose 5-phosphate from D-ribulose 5-phosphate (non-oxidative stage): step 1/1. Functionally, catalyzes the reversible conversion of ribose-5-phosphate to ribulose 5-phosphate. The sequence is that of Ribose-5-phosphate isomerase A from Nitrobacter hamburgensis (strain DSM 10229 / NCIMB 13809 / X14).